Reading from the N-terminus, the 161-residue chain is ATP synthase subunit b 1 (161 aa).

Residues 5–25 (PETWVAIAFLLLMGVFAYVGV) traverse the membrane as a helical segment.

Belongs to the ATPase B chain family. In terms of assembly, F-type ATPases have 2 components, F(1) - the catalytic core - and F(0) - the membrane proton channel. F(1) has five subunits: alpha(3), beta(3), gamma(1), delta(1), epsilon(1). F(0) has three main subunits: a(1), b(2) and c(10-14). The alpha and beta chains form an alternating ring which encloses part of the gamma chain. F(1) is attached to F(0) by a central stalk formed by the gamma and epsilon chains, while a peripheral stalk is formed by the delta and b chains.

It localises to the cell inner membrane. Its function is as follows. F(1)F(0) ATP synthase produces ATP from ADP in the presence of a proton or sodium gradient. F-type ATPases consist of two structural domains, F(1) containing the extramembraneous catalytic core and F(0) containing the membrane proton channel, linked together by a central stalk and a peripheral stalk. During catalysis, ATP synthesis in the catalytic domain of F(1) is coupled via a rotary mechanism of the central stalk subunits to proton translocation. Functionally, component of the F(0) channel, it forms part of the peripheral stalk, linking F(1) to F(0). This is ATP synthase subunit b 1 from Nitrobacter winogradskyi (strain ATCC 25391 / DSM 10237 / CIP 104748 / NCIMB 11846 / Nb-255).